Here is a 267-residue protein sequence, read N- to C-terminus: tRNA-cytidine(32) 2-sulfurtransferase 1 (267 aa).

The PP-loop motif motif lies at 42–47 (SGGKDS). 3 residues coordinate [4Fe-4S] cluster: Cys-117, Cys-120, and Cys-208.

This sequence belongs to the TtcA family. As to quaternary structure, homodimer. Requires Mg(2+) as cofactor. It depends on [4Fe-4S] cluster as a cofactor.

The protein resides in the cytoplasm. It carries out the reaction cytidine(32) in tRNA + S-sulfanyl-L-cysteinyl-[cysteine desulfurase] + AH2 + ATP = 2-thiocytidine(32) in tRNA + L-cysteinyl-[cysteine desulfurase] + A + AMP + diphosphate + H(+). Its pathway is tRNA modification. In terms of biological role, catalyzes the ATP-dependent 2-thiolation of cytidine in position 32 of tRNA, to form 2-thiocytidine (s(2)C32). The sulfur atoms are provided by the cysteine/cysteine desulfurase (IscS) system. The protein is tRNA-cytidine(32) 2-sulfurtransferase 1 of Francisella tularensis subsp. tularensis (strain FSC 198).